Reading from the N-terminus, the 194-residue chain is MALCARAALLLGALQVLALPGAVAQETYAQGSPSGNHSVPLLTANVNVTENTTMQVVSNQTSQISTVKPSSVLPKNVTAATVRPATIKVSTPGVSPHVTPSASKSTPKTSASPNSTQTSASMTTTAHSSLLTSVTVSATTHPTKGKGSKFDAGSFVGGIVLTLGVLSILYIGCKMYYSRRGIRYRSIDEHDAII.

The signal sequence occupies residues 1 to 24; the sequence is MALCARAALLLGALQVLALPGAVA. Residues 25 to 151 lie on the Extracellular side of the membrane; that stretch reads QETYAQGSPS…PTKGKGSKFD (127 aa). N-linked (GlcNAc...) asparagine glycosylation is found at N36, N47, N51, N59, N76, and N114. The tract at residues 88-124 is disordered; the sequence is KVSTPGVSPHVTPSASKSTPKTSASPNSTQTSASMTT. Positions 99 to 124 are enriched in low complexity; that stretch reads TPSASKSTPKTSASPNSTQTSASMTT. The helical transmembrane segment at 152-172 threads the bilayer; that stretch reads AGSFVGGIVLTLGVLSILYIG. Over 173-194 the chain is Cytoplasmic; it reads CKMYYSRRGIRYRSIDEHDAII. Position 186 is a phosphoserine (S186).

The protein belongs to the CD164 family.

It localises to the membrane. Functionally, implicated in oncotic cell death, characterized by cell swelling, organelle swelling, vacuolization and increased membrane permeability. The chain is Porimin (Tmem123) from Rattus norvegicus (Rat).